The primary structure comprises 243 residues: Vimentin A2 (243 aa).

Residues 1 to 22 (GFSLQDELDFLKKLHDEELADV) are coil 1B. The IF rod domain occupies 1–188 (GFSLQDELDF…KLLEGEESRI (188 aa)). Positions 23 to 45 (QAQIQDQQVQVDMDMAKPDLTAA) are linker 12. The segment at 46 to 184 (LRDVRLQYEN…ATYRKLLEGE (139 aa)) is coil 2. Residues 185–243 (ESRITTPLPNLSSFNLRDAILETKPILENTFSKKVLIKTIETRDGEVINESTQNHDDLE) are tail.

Belongs to the intermediate filament family. As to quaternary structure, homomer. One of the most prominent phosphoproteins in various cells of mesenchymal origin. Phosphorylation is enhanced during cell division, at which time vimentin filaments are significantly reorganized. In terms of tissue distribution, expressed in low amounts in retina, optic nerve, and brain and in higher amounts in spinal cord.

In terms of biological role, vimentins are class-III intermediate filaments found in various non-epithelial cells, especially mesenchymal cells. Vimentin is attached to the nucleus, endoplasmic reticulum, and mitochondria, either laterally or terminally. The protein is Vimentin A2 of Carassius auratus (Goldfish).